The primary structure comprises 819 residues: Transferrin 2 (819 aa).

The N-terminal stretch at 1–21 is a signal peptide; that stretch reads MASSLVFVALVGALCFTLANA. In terms of domain architecture, Transferrin-like 1 spans 33–373; the sequence is MVWCTKSQAE…QYDQYRSERL (341 aa). Intrachain disulfides connect Cys-36/Cys-78 and Cys-46/Cys-69. N-linked (GlcNAc...) asparagine glycans are attached at residues Asn-48 and Asn-66. 2 residues coordinate Fe(3+): Asp-93 and Tyr-121. Intrachain disulfides connect Cys-147/Cys-237, Cys-190/Cys-213, and Cys-273/Cys-287. The hydrogencarbonate site is built by Ala-155 and Gly-156. An N-linked (GlcNAc...) asparagine glycan is attached at Asn-187. Tyr-231 is a binding site for Fe(3+). A disordered region spans residues 325 to 361; sequence GTRDDQSRQGGQSFNSRNNINDQNAYGQFDNNDPYRT. Positions 332–361 are enriched in polar residues; it reads RQGGQSFNSRNNINDQNAYGQFDNNDPYRT. Residue Asn-388 is glycosylated (N-linked (GlcNAc...) asparagine). The Transferrin-like 2 domain occupies 450 to 796; sequence MTLCVTSENE…FMRARRITDC (347 aa). 2 cysteine pairs are disulfide-bonded: Cys-453-Cys-490 and Cys-463-Cys-481. Fe(3+)-binding residues include Asp-505 and Tyr-533. 4 cysteine pairs are disulfide-bonded: Cys-557-Cys-646, Cys-599-Cys-621, Cys-618-Cys-629, and Cys-687-Cys-701. Thr-559, Ala-565, and Gly-566 together coordinate hydrogencarbonate. N-linked (GlcNAc...) asparagine glycosylation is present at Asn-720. Residue Cys-796 is the site of GPI-anchor amidated cysteine attachment. Positions 797–819 are cleaved as a propeptide — removed in mature form; sequence YAGASQLALSVGLLLVGSLVAML.

This sequence belongs to the transferrin family. As to quaternary structure, forms a complex composed of septa junction proteins Nrx-IV/Nrx, Tsf2/MTf, Cont and Nrg during late embryogenesis.

The protein resides in the apicolateral cell membrane. It is found in the cell junction. Its subcellular location is the septate junction. Its function is as follows. Iron-binding protein and component of septate junctions that form the paracellular permeability barrier in epithelial tissues. In an iron-dependent manner, required for septate junction assembly during epithelial maturation in embryos and mature septa junctions stability. This is Transferrin 2 from Drosophila melanogaster (Fruit fly).